The primary structure comprises 223 residues: Ribose-5-phosphate isomerase A (223 aa).

Residues 32 to 35 (TGST), 83 to 86 (DGAD), and 96 to 99 (KGGG) contribute to the substrate site. E105 serves as the catalytic Proton acceptor. Position 123 (K123) interacts with substrate.

This sequence belongs to the ribose 5-phosphate isomerase family. In terms of assembly, homodimer.

The enzyme catalyses aldehydo-D-ribose 5-phosphate = D-ribulose 5-phosphate. The protein operates within carbohydrate degradation; pentose phosphate pathway; D-ribose 5-phosphate from D-ribulose 5-phosphate (non-oxidative stage): step 1/1. Functionally, catalyzes the reversible conversion of ribose-5-phosphate to ribulose 5-phosphate. The chain is Ribose-5-phosphate isomerase A from Acinetobacter baumannii (strain SDF).